A 303-amino-acid chain; its full sequence is Probable cell division protein WhiA (303 aa).

The H-T-H motif DNA-binding region spans 272 to 303 (SIQQVADALEFPITKSGVNHRLRKINKIADDL).

Belongs to the WhiA family.

Functionally, involved in cell division and chromosome segregation. In Streptococcus pyogenes serotype M1, this protein is Probable cell division protein WhiA.